The sequence spans 149 residues: Endoribonuclease YbeY (149 aa).

His-112, His-116, and His-122 together coordinate Zn(2+).

Belongs to the endoribonuclease YbeY family. The cofactor is Zn(2+).

The protein resides in the cytoplasm. In terms of biological role, single strand-specific metallo-endoribonuclease involved in late-stage 70S ribosome quality control and in maturation of the 3' terminus of the 16S rRNA. The sequence is that of Endoribonuclease YbeY from Methylibium petroleiphilum (strain ATCC BAA-1232 / LMG 22953 / PM1).